A 737-amino-acid chain; its full sequence is MVVFNGLLKIKICEAVSLKPTAWSLRHAVGPRPQTFLLDPYIALNVDDSRIGQTATKQKTNSPAWHDEFVTDVCNGRKIELAVFHDAPIGYDDFVANCTIQFEELLQNGSRHFEDWIDLEPEGKVYVIIDLSGSSGEAPKDNEERVFRERMRPRKRQGAVRRRVHQVNGHKFMATYLRQPTYCSHCRDFIWGVIGKQGYQCQVCTCVVHKRCHELIITKCAGLKKQETPDEVGSQRFSVNMPHKFGIHNYKVPTFCDHCGSLLWGLLRQGLQCKVCKMNVHRRCETNVAPNCGVDARGIAKVLADLGVTPDKITNSGQRRKKLAAGAESPQPASGNSPSEDDRSKSAPTSPCDQELKELENNIRKALSFDNRGEEHRASSSTDGQLASPGENGEVRQGQAKRLGLDEFNFIKVLGKGSFGKVMLAELKGKDEVYAVKVLKKDVILQDDDVDCTMTEKRILALARKHPYLTQLYCCFQTKDRLFFVMEYVNGGDLMFQIQRSRKFDEPRSGFYAAEVTSALMFLHQHGVIYRDLKLDNILLDAEGHSKLADFGMCKEGILNGVTTTTFCGTPDYIAPEILQELEYGPSVDWWALGVLMYEMMAGQPPFEADNEDDLFESILHDDVLYPVWLSKEAVSILKAFMTKNPHKRLGCVAAQNGEDAIKQHPFFKEIDWVLLEQKKMKPPFKPRIKTKRDVNNFDQDFTREEPILTLVDEAIVKQINQEEFKGFSYFGEDLMP.

The C2 domain occupies methionine 1 to isoleucine 117. A Phosphoserine modification is found at serine 62. Residues glycine 169–cysteine 220 form a Phorbol-ester/DAG-type 1 zinc finger. Positions leucine 223 to threonine 228 match the Interaction with actin motif. Threonine 228 bears the Phosphothreonine mark. Position 234 is a phosphoserine (serine 234). The segment at proline 242–cysteine 292 adopts a Phorbol-ester/DAG-type 2 zinc-finger fold. Threonine 309 bears the Phosphothreonine mark. The segment at proline 310 to leucine 356 is disordered. Residues serine 316, serine 329, serine 337, and serine 346 each carry the phosphoserine modification. Threonine 349 carries the post-translational modification Phosphothreonine. Serine 350 bears the Phosphoserine; by MAPK11 and MAPK14 mark. 2 positions are modified to phosphoserine: serine 368 and serine 388. A disordered region spans residues phenylalanine 369–glycine 398. Residues phenylalanine 408–phenylalanine 668 form the Protein kinase domain. ATP is bound by residues leucine 414 to valine 422 and lysine 437. Aspartate 532 (proton acceptor) is an active-site residue. The residue at position 566 (threonine 566) is a Phosphothreonine; by PDPK1. One can recognise an AGC-kinase C-terminal domain in the interval lysine 669–proline 737. Threonine 703 and threonine 710 each carry phosphothreonine. Serine 729 carries the phosphoserine modification.

Belongs to the protein kinase superfamily. AGC Ser/Thr protein kinase family. PKC subfamily. Forms a ternary complex with TRIM63 and RACK1/GN2BL1. Can form a complex with PDLIM5 and N-type calcium channel. Interacts with COPB1. Interacts with DGKQ. Interacts with STAT3. Interacts with YWHAB. Interacts with HSP90AB1; promotes functional activation in a heat shock-dependent manner. Interacts (via phorbol-ester/DAG-type 2 domain) with PRPH and VIM. Interacts with NLRP5/MATER. Post-translationally, phosphorylation on Thr-566 by PDPK1 triggers autophosphorylation on Ser-729. Phosphorylation in the hinge domain at Ser-350 by MAPK11 or MAPK14, Ser-346 by GSK3B and Ser-368 by autophosphorylation is required for interaction with YWHAB. In response to growth factors, phosphorylated at Thr-703 and Ser-729 by the mTORC2 complex, promoting autophosphorylation and activation of PRKCE.

Its subcellular location is the cytoplasm. It localises to the cytoskeleton. It is found in the cell membrane. The protein localises to the perinuclear region. The protein resides in the nucleus. The catalysed reaction is L-seryl-[protein] + ATP = O-phospho-L-seryl-[protein] + ADP + H(+). The enzyme catalyses L-threonyl-[protein] + ATP = O-phospho-L-threonyl-[protein] + ADP + H(+). With respect to regulation, novel PKCs (PRKCD, PRKCE, PRKCH and PRKCQ) are calcium-insensitive, but activated by diacylglycerol (DAG) and phosphatidylserine. Three specific sites; Thr-566 (activation loop of the kinase domain), Thr-710 (turn motif) and Ser-729 (hydrophobic region), need to be phosphorylated for its full activation. Functionally, calcium-independent, phospholipid- and diacylglycerol (DAG)-dependent serine/threonine-protein kinase that plays essential roles in the regulation of multiple cellular processes linked to cytoskeletal proteins, such as cell adhesion, motility, migration and cell cycle, functions in neuron growth and ion channel regulation, and is involved in immune response, cancer cell invasion and regulation of apoptosis. Mediates cell adhesion to the extracellular matrix via integrin-dependent signaling, by mediating angiotensin-2-induced activation of integrin beta-1 (ITGB1) in cardiac fibroblasts. Phosphorylates MARCKS, which phosphorylates and activates PTK2/FAK, leading to the spread of cardiomyocytes. Involved in the control of the directional transport of ITGB1 in mesenchymal cells by phosphorylating vimentin (VIM), an intermediate filament (IF) protein. In epithelial cells, associates with and phosphorylates keratin-8 (KRT8), which induces targeting of desmoplakin at desmosomes and regulates cell-cell contact. Phosphorylates IQGAP1, which binds to CDC42, mediating epithelial cell-cell detachment prior to migration. During cytokinesis, forms a complex with YWHAB, which is crucial for daughter cell separation, and facilitates abscission by a mechanism which may implicate the regulation of RHOA. In cardiac myocytes, regulates myofilament function and excitation coupling at the Z-lines, where it is indirectly associated with F-actin via interaction with COPB1. During endothelin-induced cardiomyocyte hypertrophy, mediates activation of PTK2/FAK, which is critical for cardiomyocyte survival and regulation of sarcomere length. Plays a role in the pathogenesis of dilated cardiomyopathy via persistent phosphorylation of troponin I (TNNI3). Involved in nerve growth factor (NFG)-induced neurite outgrowth and neuron morphological change independently of its kinase activity, by inhibition of RHOA pathway, activation of CDC42 and cytoskeletal rearrangement. May be involved in presynaptic facilitation by mediating phorbol ester-induced synaptic potentiation. Phosphorylates gamma-aminobutyric acid receptor subunit gamma-2 (GABRG2), which reduces the response of GABA receptors to ethanol and benzodiazepines and may mediate acute tolerance to the intoxicating effects of ethanol. Upon PMA treatment, phosphorylates the capsaicin- and heat-activated cation channel TRPV1, which is required for bradykinin-induced sensitization of the heat response in nociceptive neurons. Is able to form a complex with PDLIM5 and N-type calcium channel, and may enhance channel activities and potentiates fast synaptic transmission by phosphorylating the pore-forming alpha subunit CACNA1B (CaV2.2). Downstream of TLR4, plays an important role in the lipopolysaccharide (LPS)-induced immune response by phosphorylating and activating TICAM2/TRAM, which in turn activates the transcription factor IRF3 and subsequent cytokines production. In differentiating erythroid progenitors, is regulated by EPO and controls the protection against the TNFSF10/TRAIL-mediated apoptosis, via BCL2. May be involved in the regulation of the insulin-induced phosphorylation and activation of AKT1. Phosphorylates NLRP5/MATER and may thereby modulate AKT pathway activation in cumulus cells. Phosphorylates and activates LRRK1, which phosphorylates RAB proteins involved in intracellular trafficking. The polypeptide is Protein kinase C epsilon type (Prkce) (Rattus norvegicus (Rat)).